Consider the following 247-residue polypeptide: tRNA (guanine-N(1)-)-methyltransferase (247 aa).

S-adenosyl-L-methionine contacts are provided by residues Gly-112 and Ile-132–Leu-137.

Belongs to the RNA methyltransferase TrmD family. Homodimer.

Its subcellular location is the cytoplasm. The enzyme catalyses guanosine(37) in tRNA + S-adenosyl-L-methionine = N(1)-methylguanosine(37) in tRNA + S-adenosyl-L-homocysteine + H(+). Its function is as follows. Specifically methylates guanosine-37 in various tRNAs. This is tRNA (guanine-N(1)-)-methyltransferase from Geotalea uraniireducens (strain Rf4) (Geobacter uraniireducens).